The primary structure comprises 469 residues: SHC-transforming protein 1 (469 aa).

The tract at residues 1–26 (MNKLSGGGGRRTRVEGGQLGGEEWTR) is disordered. Phosphoserine is present on Ser29. Lys44 is subject to N6-acetyllysine. One can recognise a PID domain in the interval 46 to 229 (MGPGVSYLVR…AGFDGSAWDE (184 aa)). A CH1 region spans residues 230 to 373 (EEEELPDHQY…SMAEQLQGES (144 aa)). Residues Tyr239, Tyr240, and Tyr313 each carry the phosphotyrosine modification. The tract at residues 322–344 (ARQAGGGAGPPNPSVNGSAPRDL) is disordered. Ser339 bears the Phosphoserine mark. An SH2 domain is found at 374–465 (WFHGKLSRRE…GSELCLQQPV (92 aa)).

In terms of assembly, interacts with CPNE3; this interaction may mediate the binding of CPNE3 with ERBB2. Interacts with the NPXY motif of tyrosine-phosphorylated IGF1R and INSR in vitro via the PID domain. Once activated, binds to GRB2. Interacts with tyrosine-phosphorylated CD3T and DDR2. Interacts with the N-terminal region of APS. Interacts with phosphorylated LRP1 and IRS4. Interacts with INPP5D/SHIP1 and INPPL1/SHIP2. Interacts with ALK, GAB2, GRB7 and KIT. Interacts with PTPN6/SHP (tyrosine phosphorylated). Identified in a complex containing FGFR4, NCAM1, CDH2, PLCG1, FRS2A, SRC, SHC1, GAP43 and CTTN. Interacts with EPHB1 and GRB2; activates the MAPK/ERK cascade to regulate cell migration. Interacts with PDGFRB (tyrosine-phosphorylated). Interacts with ERBB4. Interacts with TEK/TIE2 (tyrosine-phosphorylated). Interacts with PTK2/FAK1. Interacts with FLT4 (tyrosine-phosphorylated). Interacts with the Trk receptors NTRK1, NTRK2 and NTRK3; in a phosphotyrosine-dependent manner. Interacts with CEACAM1; this interaction is CEACAM1-phosphorylation-dependent and mediates interaction with EGFR or INSR resulting in decrease coupling of SHC1 to the MAPK3/ERK1-MAPK1/ERK2 pathway. Interacts (via PID domain) with PEAK1 (when phosphorylated). Found in a complex with PPP1CA, PPP1CC, SHC1 and PEAK1. Post-translationally, phosphorylated by activated epidermal growth factor receptor. Phosphorylated in response to KIT signaling. Tyrosine phosphorylated in response to FLT3 signaling and by ligand-activated ALK. Tyrosine phosphorylated by TEK/TIE2. Tyrosine phosphorylated by ligand-activated PDGFRB. May be tyrosine phosphorylated by activated PTK2/FAK1. Dephosphorylation by PTPN2 may regulate interaction with GRB2. Phosphorylated in response to FLT4 signaling. Tyrosine phosphorylated by activated PTK2B/PYK2.

Its subcellular location is the cytoplasm. The protein localises to the cell junction. It is found in the focal adhesion. Its function is as follows. Signaling adapter that couples activated growth factor receptors to signaling pathways. Participates in a signaling cascade initiated by activated KIT and KITLG/SCF. Participates in signaling downstream of the angiopoietin receptor TEK/TIE2, and plays a role in the regulation of endothelial cell migration and sprouting angiogenesis. This is SHC-transforming protein 1 (Shc1) from Rattus norvegicus (Rat).